Here is a 321-residue protein sequence, read N- to C-terminus: Glucokinase (321 aa).

ATP is bound at residue 8-13 (GDVGGT).

Belongs to the bacterial glucokinase family.

It localises to the cytoplasm. The enzyme catalyses D-glucose + ATP = D-glucose 6-phosphate + ADP + H(+). This is Glucokinase from Tolumonas auensis (strain DSM 9187 / NBRC 110442 / TA 4).